A 337-amino-acid polypeptide reads, in one-letter code: D-lactate dehydrogenase (337 aa).

NAD(+) contacts are provided by residues 156 to 157 (HI), Asp176, 207 to 208 (VP), Asn213, 234 to 236 (CSR), and Asp260. Arg236 is a catalytic residue. Glu265 is a catalytic residue. The Proton donor role is filled by His297.

It belongs to the D-isomer specific 2-hydroxyacid dehydrogenase family. As to quaternary structure, homodimer.

It catalyses the reaction (R)-lactate + NAD(+) = pyruvate + NADH + H(+). In Lactobacillus helveticus (Lactobacillus suntoryeus), this protein is D-lactate dehydrogenase.